The sequence spans 959 residues: E3 ubiquitin-protein ligase arkadia-B (959 aa).

The segment covering 51 to 66 (CSDTNKQQSDLNSNGT) has biased composition (polar residues). 3 disordered regions span residues 51 to 171 (CSDT…VSSL), 189 to 212 (RKRF…MLQR), and 225 to 271 (LLPS…SGGM). The segment covering 112 to 131 (SSFSDCISSPSSSSHFGDSD) has biased composition (low complexity). Residues 142–156 (PLSSVNSTPRTQSAR) are compositionally biased toward polar residues. The span at 228-246 (SSSSSSENDLSSESSSSSS) shows a compositional bias: low complexity. Over residues 256–267 (TGENRQDGTTLP) the composition is skewed to polar residues. An SUMO interaction motif 1 (SIM) motif is present at residues 275 to 279 (VVVIE). The SUMO interaction motif 2 (SIM) signature appears at 300–306 (EVEIVTV). Positions 318-341 (HPRSHWGQNSQSGRTQEQRTRNRV) are disordered. Residues 323 to 332 (WGQNSQSGRT) show a composition bias toward polar residues. Residues 355–359 (VVDLT) carry the SUMO interaction motif 3 (SIM) motif. The span at 370 to 397 (TTSGRVESQPVSIVSSLTSTSEPASDSM) shows a compositional bias: polar residues. 4 disordered regions span residues 370 to 399 (TTSG…SMSG), 475 to 499 (HFPH…SFRD), 615 to 649 (PRPL…MDYV), and 661 to 680 (PSLT…HLSA). The span at 475–487 (HFPHHHHHHHHSS) shows a compositional bias: basic residues. Polar residues predominate over residues 620–632 (HQTSSCPHSNSAS). Residues 633-646 (QPPPPPPPPPPPPM) are compositionally biased toward pro residues. Residues 872–874 (YPH) form a ubiquitin binding region. Residues cysteine 907 and cysteine 910 each contribute to the Zn(2+) site. The RING-type; atypical zinc finger occupies 907-948 (CTICLSILEEGEDVRRLPCMHLFHQVCVDQWLITNKKCPICR). The ubiquitin binding stretch occupies residues 922-926 (RLPCM). Residues histidine 930 and cysteine 933 each contribute to the Zn(2+) site.

The protein belongs to the Arkadia family. As to quaternary structure, monomer.

It localises to the nucleus. The protein resides in the cytoplasm. The protein localises to the PML body. It carries out the reaction S-ubiquitinyl-[E2 ubiquitin-conjugating enzyme]-L-cysteine + [acceptor protein]-L-lysine = [E2 ubiquitin-conjugating enzyme]-L-cysteine + N(6)-ubiquitinyl-[acceptor protein]-L-lysine.. Its pathway is protein modification; protein ubiquitination. Its activity is regulated as follows. Binds free ubiquitin non-covalently via its RING-type zinc finger. Ubiquitin-binding leads to enhance the E3 ubiquitin-protein ligase activity by stabilizing the ubiquitin-conjugating enzyme E2 (donor ubiquitin) in the 'closed' conformation and activating ubiquitin transfer. Its function is as follows. E3 ubiquitin-protein ligase required for mesoderm patterning during embryonic development. Acts as an enhancer of the transcriptional responses of the smad2/smad3 effectors, which are activated downstream of BMP. Acts by mediating ubiquitination and degradation of SMAD inhibitors such as smad7, inducing their proteasomal degradation and thereby enhancing the transcriptional activity of TGF-beta and BMP. Specifically binds polysumoylated chains via SUMO interaction motifs (SIMs) and mediates ubiquitination of sumoylated substrates. The regulation of the BMP-SMAD signaling is however independent of sumoylation and is not dependent of SUMO interaction motifs (SIMs). In Xenopus laevis (African clawed frog), this protein is E3 ubiquitin-protein ligase arkadia-B (rnf111-b).